The chain runs to 122 residues: Large ribosomal subunit protein uL14 (122 aa).

The protein belongs to the universal ribosomal protein uL14 family. As to quaternary structure, part of the 50S ribosomal subunit. Forms a cluster with proteins L3 and L19. In the 70S ribosome, L14 and L19 interact and together make contacts with the 16S rRNA in bridges B5 and B8.

In terms of biological role, binds to 23S rRNA. Forms part of two intersubunit bridges in the 70S ribosome. In Solidesulfovibrio magneticus (strain ATCC 700980 / DSM 13731 / RS-1) (Desulfovibrio magneticus), this protein is Large ribosomal subunit protein uL14.